Reading from the N-terminus, the 415-residue chain is NPL4-like protein (415 aa).

The 150-residue stretch at alanine 130–cysteine 279 folds into the MPN domain.

This sequence belongs to the NPL4 family.

Its subcellular location is the endoplasmic reticulum. Its pathway is protein degradation; proteasomal ubiquitin-dependent pathway. In terms of biological role, may be part of a complex that binds ubiquitinated proteins and that is necessary for the export of misfolded proteins from the ER to the cytoplasm, where they are degraded by the proteasome. This chain is NPL4-like protein, found in Oryza sativa subsp. japonica (Rice).